We begin with the raw amino-acid sequence, 459 residues long: Glycosyl hydrolase family 109 protein 1 (459 aa).

A signal peptide (tat-type signal) is located at residues 1-31 (MHNIHRRHFLKAAGAVTAGLVTANIALNANA). NAD(+) is bound by residues 64 to 65 (ER), Asp-86, 135 to 138 (WEWH), 155 to 156 (EV), and Asn-184. Substrate is bound by residues Tyr-213, Arg-232, 244-247 (YPTH), and Tyr-326. Position 244 (Tyr-244) interacts with NAD(+).

This sequence belongs to the Gfo/Idh/MocA family. Glycosyl hydrolase 109 subfamily. It depends on NAD(+) as a cofactor. In terms of processing, predicted to be exported by the Tat system. The position of the signal peptide cleavage has not been experimentally proven.

In terms of biological role, glycosidase. This is Glycosyl hydrolase family 109 protein 1 from Shewanella sp. (strain MR-4).